The sequence spans 323 residues: Glucokinase (323 aa).

Residue 8–13 (GDVGGT) participates in ATP binding.

It belongs to the bacterial glucokinase family.

It localises to the cytoplasm. It catalyses the reaction D-glucose + ATP = D-glucose 6-phosphate + ADP + H(+). This is Glucokinase from Yersinia enterocolitica serotype O:8 / biotype 1B (strain NCTC 13174 / 8081).